The following is a 128-amino-acid chain: Probable 4-amino-4-deoxy-L-arabinose-phosphoundecaprenol flippase subunit ArnF (128 aa).

Over 1 to 2 (MG) the chain is Cytoplasmic. Residues 3–23 (LIWGLFSVIIASVAQLSLGFA) form a helical membrane-spanning segment. The Periplasmic segment spans residues 24-35 (ASHLPPMTHLWD). Residues 36 to 56 (FIAALLAFGLDARILLLGLLG) traverse the membrane as a helical segment. Residues 57 to 76 (YLLSVFCWYKTLHKLALSKA) are Cytoplasmic-facing. A helical membrane pass occupies residues 77-97 (YALLSMSYVLVWIASMVLPGW). At 98–100 (EGT) the chain is on the periplasmic side. The helical transmembrane segment at 101–121 (FSLKALLGVACIMSGLMLIFL) threads the bilayer. Over 122–128 (PTTKQRY) the chain is Cytoplasmic.

Belongs to the ArnF family. As to quaternary structure, heterodimer of ArnE and ArnF.

It localises to the cell inner membrane. It functions in the pathway bacterial outer membrane biogenesis; lipopolysaccharide biosynthesis. Translocates 4-amino-4-deoxy-L-arabinose-phosphoundecaprenol (alpha-L-Ara4N-phosphoundecaprenol) from the cytoplasmic to the periplasmic side of the inner membrane. This is Probable 4-amino-4-deoxy-L-arabinose-phosphoundecaprenol flippase subunit ArnF from Shigella boydii serotype 4 (strain Sb227).